The following is a 650-amino-acid chain: Phosphatidylinositol-3,5-bisphosphate 3-phosphatase MTMR14 (650 aa).

The tract at residues 1–27 is disordered; that stretch reads MAGARAAAAAASAGSSASSGNQPPQEL. The residue at position 194 (Lys194) is an N6-acetyllysine. Residue Asn226 is glycosylated (N-linked (GlcNAc...) asparagine). Cys330 serves as the catalytic Phosphocysteine intermediate. A 1,2-diacyl-sn-glycero-3-phospho-(1D-myo-inositol-3,5-bisphosphate) contacts are provided by Gly333, Trp334, Asp335, Arg336, and Arg382. Residues Gly333, Trp334, Asp335, Arg336, and Arg382 each contribute to the a 1,2-diacyl-sn-glycero-3-phospho-(1D-myo-inositol-3-phosphate) site. The interval 476-546 is disordered; that stretch reads AAWRKSHSSS…PRSVDHPLPG (71 aa). Residue Ser518 is modified to Phosphoserine. Residue Asn519 is glycosylated (N-linked (GlcNAc...) asparagine). A phosphoserine mark is found at Ser530, Ser580, and Ser624. Arg638 is subject to Omega-N-methylarginine.

The protein belongs to the protein-tyrosine phosphatase family. Non-receptor class myotubularin subfamily. As to expression, expressed in various tissues, including heart, skeletal muscle, placenta, liver, lung, kidney and pancreas.

Its subcellular location is the cytoplasm. The catalysed reaction is a 1,2-diacyl-sn-glycero-3-phospho-(1D-myo-inositol-3,5-bisphosphate) + H2O = a 1,2-diacyl-sn-glycero-3-phospho-(1D-myo-inositol-5-phosphate) + phosphate. It catalyses the reaction a 1,2-diacyl-sn-glycero-3-phospho-(1D-myo-inositol-3-phosphate) + H2O = a 1,2-diacyl-sn-glycero-3-phospho-(1D-myo-inositol) + phosphate. Functionally, lipid phosphatase that specifically dephosphorylates the D-3 position of phosphatidylinositol 3-phosphate and phosphatidylinositol 3,5-bisphosphate, generating phosphatidylinositol and phosphatidylinositol 5-phosphate. This Homo sapiens (Human) protein is Phosphatidylinositol-3,5-bisphosphate 3-phosphatase MTMR14.